Reading from the N-terminus, the 120-residue chain is U13-lycotoxin-Ls1f (120 aa).

Residues 1–16 (MKILFVLISILYAVYC) form the signal peptide. The propeptide occupies 17 to 54 (FSSEEDVDSAYLANELEPVEDINSEQYAALEPKEEQER). Intrachain disulfides connect Cys56/Cys70, Cys63/Cys76, Cys69/Cys87, and Cys78/Cys85. The Agouti domain maps to 56 to 95 (CAGMGQDCKDDCDCCLNIATCNCWFGRYFCSCTFGDYQTC).

This sequence belongs to the neurotoxin 05 (agouti) family. Post-translationally, contains 6 disulfide bonds. In terms of tissue distribution, expressed by the venom gland.

Its subcellular location is the secreted. This chain is U13-lycotoxin-Ls1f, found in Lycosa singoriensis (Wolf spider).